The primary structure comprises 309 residues: Probable RuBisCO transcriptional regulator (309 aa).

Residues 6–63 enclose the HTH lysR-type domain; sequence FTLDQLRILKAIVKEGSFKRAADSLYVSQPAISLQIQNLEKQLNIPLFERSNKKATLT. Positions 23–42 form a DNA-binding region, H-T-H motif; it reads FKRAADSLYVSQPAISLQIQ.

It belongs to the LysR transcriptional regulatory family.

It localises to the plastid. The protein resides in the chloroplast. In terms of biological role, trans-acting transcriptional regulator of RuBisCO genes (rbcL and rbcS) expression. This Gracilaria tenuistipitata var. liui (Red alga) protein is Probable RuBisCO transcriptional regulator (rbcR).